The sequence spans 541 residues: Neutral amino acid transporter B(0) (541 aa).

At methionine 1 the chain carries N-acetylmethionine. Residues 1–51 (MVADPPRDSKGLAAAEPTANGGLALASIEDQGAAAGGYCGSRDQVRRCLRA) lie on the Cytoplasmic side of the membrane. Residues 52–81 (NLLVLLTVVAVVAGVALGLGVSGAGGALAL) form a helical membrane-spanning segment. The Extracellular segment spans residues 82–94 (GPERLSAFVFPGE). The helical transmembrane segment at 95 to 116 (LLLRLLRMIILPLVVCSLIGGA) threads the bilayer. At 117–130 (ASLDPGALGRLGAW) the chain is on the cytoplasmic side. Residues 131 to 153 (ALLFFLVTTLLASALGVGLALAL) traverse the membrane as a helical segment. Topologically, residues 154–224 (QPGAASAAIN…GTRVKVPVGQ (71 aa)) are extracellular. N-linked (GlcNAc...) asparagine glycans are attached at residues asparagine 163 and asparagine 212. Residues 225–248 (EVEGMNILGLVVFAIVFGVALRKL) traverse the membrane as a helical segment. At 249–257 (GPEGELLIR) the chain is on the cytoplasmic side. A helical membrane pass occupies residues 258-285 (FFNSFNEATMVLVSWIMWYAPVGIMFLV). The Extracellular segment spans residues 286 to 306 (AGKIVEMEDVGLLFARLGKYI). A helical membrane pass occupies residues 307–328 (LCCLLGHAIHGLLVLPLIYFLF). Residues 329–333 (TRKNP) lie on the Cytoplasmic side of the membrane. The segment at residues 334–364 (YRFLWGIVTPLATAFGTSSSSATLPLMMKCV) is an intramembrane region (discontinuously helical). Over 365–373 (EENNGVAKH) the chain is Cytoplasmic. The chain crosses the membrane as a helical span at residues 374–400 (ISRFILPIGATVNMDGAALFQCVAAVF). Positions 382, 384, and 386 each coordinate Na(+). Over 401 to 413 (IAQLSQQSLDFVK) the chain is Extracellular. The segment at residues 414–447 (IITILVTATASSVGAAGIPAGGVLTLAIILEAVN) is an intramembrane region (discontinuously helical). Residues 448 to 460 (LPVDHISLILAVD) are Extracellular-facing. Residues 461–482 (WLVDRSCTVLNVEGDALGAGLL) traverse the membrane as a helical segment. 2 residues coordinate Na(+): asparagine 471 and aspartate 475. The Cytoplasmic segment spans residues 483–541 (QNYVDRTESRSTEPELIQVKSELPLDPLPVPTEEGNPLLKHYRGPAGDATVASEKESVM). Serine 493 is subject to Phosphoserine. A Phosphothreonine modification is found at threonine 494. A phosphoserine mark is found at serine 503, serine 535, and serine 539. Positions 511–541 (PVPTEEGNPLLKHYRGPAGDATVASEKESVM) are disordered.

This sequence belongs to the dicarboxylate/amino acid:cation symporter (DAACS) (TC 2.A.23) family. SLC1A5 subfamily. As to quaternary structure, homotrimer. Interacts with ERVH48-1/suppressyn; may negatively regulate syncytialization. Placenta, lung, skeletal muscle, kidney, pancreas, and intestine. Expressed in CD34-positive hematopoietic progenitors (at protein level).

The protein localises to the cell membrane. The protein resides in the melanosome. It carries out the reaction L-glutamine(out) + L-serine(in) + Na(+)(out) = L-glutamine(in) + L-serine(out) + Na(+)(in). The catalysed reaction is L-glutamine(in) + L-serine(out) + Na(+)(out) = L-glutamine(out) + L-serine(in) + Na(+)(in). It catalyses the reaction L-threonine(in) + L-glutamine(out) + Na(+)(out) = L-threonine(out) + L-glutamine(in) + Na(+)(in). The enzyme catalyses L-threonine(out) + L-glutamine(in) + Na(+)(out) = L-threonine(in) + L-glutamine(out) + Na(+)(in). It carries out the reaction L-asparagine(in) + L-glutamine(out) + Na(+)(out) = L-asparagine(out) + L-glutamine(in) + Na(+)(in). The catalysed reaction is L-asparagine(out) + L-glutamine(in) + Na(+)(out) = L-asparagine(in) + L-glutamine(out) + Na(+)(in). It catalyses the reaction L-glutamine(in) + L-alanine(out) + Na(+)(out) = L-glutamine(out) + L-alanine(in) + Na(+)(in). The enzyme catalyses L-valine(out) + L-glutamine(in) + Na(+)(out) = L-valine(in) + L-glutamine(out) + Na(+)(in). It carries out the reaction L-glutamine(in) + L-methionine(out) + Na(+)(out) = L-glutamine(out) + L-methionine(in) + Na(+)(in). The catalysed reaction is L-glutamine(in) + L-glutamate(out) + Na(+)(out) + H(+)(out) = L-glutamine(out) + L-glutamate(in) + Na(+)(in) + H(+)(in). It catalyses the reaction D-serine(in) + L-glutamine(out) + Na(+)(out) = D-serine(out) + L-glutamine(in) + Na(+)(in). The enzyme catalyses D-serine(in) + L-alanine(out) + Na(+)(out) = D-serine(out) + L-alanine(in) + Na(+)(in). It carries out the reaction nitrate(in) = nitrate(out). The catalysed reaction is iodide(out) = iodide(in). It catalyses the reaction thiocyanate(in) = thiocyanate(out). With respect to regulation, regulated by L-cysteine, which can either inhibit substrate influx or trigger substrate efflux without being transported itself. Sodium-coupled antiporter of neutral amino acids. In a tri-substrate transport cycle, exchanges neutral amino acids between the extracellular and intracellular compartments, coupled to the inward cotransport of at least one sodium ion. The preferred substrate is the essential amino acid L-glutamine, a precursor for biosynthesis of proteins, nucleotides and amine sugars as well as an alternative fuel for mitochondrial oxidative phosphorylation. Exchanges L-glutamine with other neutral amino acids such as L-serine, L-threonine and L-asparagine in a bidirectional way. Provides L-glutamine to proliferating stem and activated cells driving the metabolic switch toward cell differentiation. The transport cycle is usually pH-independent, with the exception of L-glutamate. Transports extracellular L-glutamate coupled to the cotransport of one proton and one sodium ion in exchange for intracellular L-glutamine counter-ion. May provide for L-glutamate uptake in glial cells regulating glutamine/glutamate cycle in the nervous system. Can transport D-amino acids. Mediates D-serine release from the retinal glia potentially affecting NMDA receptor function in retinal neurons. Displays sodium- and amino acid-dependent but uncoupled channel-like anion conductance with a preference SCN(-) &gt;&gt; NO3(-) &gt; I(-) &gt; Cl(-). Through binding of the fusogenic protein syncytin-1/ERVW-1 may mediate trophoblasts syncytialization, the spontaneous fusion of their plasma membranes, an essential process in placental development. In terms of biological role, (Microbial infection) Acts as a cell surface receptor for Feline endogenous virus RD114. Its function is as follows. (Microbial infection) Acts as a cell surface receptor for Baboon M7 endogenous virus. Functionally, (Microbial infection) Acts as a cell surface receptor for type D simian retroviruses. The protein is Neutral amino acid transporter B(0) of Homo sapiens (Human).